We begin with the raw amino-acid sequence, 79 residues long: Acyl carrier protein (79 aa).

The Carrier domain maps to 3-78; sequence QEILEKVCSI…DAVKFIEEKK (76 aa). O-(pantetheine 4'-phosphoryl)serine is present on Ser38.

This sequence belongs to the acyl carrier protein (ACP) family. 4'-phosphopantetheine is transferred from CoA to a specific serine of apo-ACP by AcpS. This modification is essential for activity because fatty acids are bound in thioester linkage to the sulfhydryl of the prosthetic group.

The protein resides in the cytoplasm. It functions in the pathway lipid metabolism; fatty acid biosynthesis. Its function is as follows. Carrier of the growing fatty acid chain in fatty acid biosynthesis. This Prochlorococcus marinus (strain MIT 9301) protein is Acyl carrier protein.